Here is a 498-residue protein sequence, read N- to C-terminus: Glutamate--tRNA ligase (498 aa).

A 'HIGH' region motif is present at residues 12–22; that stretch reads PSPTGHLHIGN. Residues 259–263 carry the 'KMSKS' region motif; the sequence is KLSKR. Lys262 lines the ATP pocket.

This sequence belongs to the class-I aminoacyl-tRNA synthetase family. Glutamate--tRNA ligase type 1 subfamily. In terms of assembly, monomer.

The protein resides in the cytoplasm. The catalysed reaction is tRNA(Glu) + L-glutamate + ATP = L-glutamyl-tRNA(Glu) + AMP + diphosphate. Its function is as follows. Catalyzes the attachment of glutamate to tRNA(Glu) in a two-step reaction: glutamate is first activated by ATP to form Glu-AMP and then transferred to the acceptor end of tRNA(Glu). This chain is Glutamate--tRNA ligase, found in Limosilactobacillus fermentum (strain NBRC 3956 / LMG 18251) (Lactobacillus fermentum).